The sequence spans 257 residues: Snake venom serine protease KN11 (257 aa).

The N-terminal stretch at 1–18 (MVLIRVLANLLILQLSYA) is a signal peptide. Residues 19 to 24 (QKSSEL) constitute a propeptide that is removed on maturation. One can recognise a Peptidase S1 domain in the interval 25–248 (VTGGHPCNIN…HLDWIKSIIA (224 aa)). Intrachain disulfides connect Cys-31–Cys-162, Cys-49–Cys-65, Cys-97–Cys-255, Cys-141–Cys-209, Cys-173–Cys-188, and Cys-199–Cys-224. Catalysis depends on charge relay system residues His-64 and Asp-109. 2 N-linked (GlcNAc...) asparagine glycosylation sites follow: Asn-120 and Asn-121. Catalysis depends on Ser-203, which acts as the Charge relay system.

It belongs to the peptidase S1 family. Snake venom subfamily. As to quaternary structure, monomer. In terms of tissue distribution, expressed by the venom gland.

The protein resides in the secreted. Snake venom serine protease that may act in the hemostasis system of the prey. The polypeptide is Snake venom serine protease KN11 (Trimeresurus stejnegeri (Chinese green tree viper)).